An 834-amino-acid polypeptide reads, in one-letter code: Probable receptor-like protein kinase At2g23200 (834 aa).

Positions 1-28 (MENFCFQDSVSLFITIMVLVLLPRLSLS) are cleaved as a signal peptide. Residues 29 to 405 (DTSTYTRPEN…SSSRVHIITG (377 aa)) lie on the Extracellular side of the membrane. 10 N-linked (GlcNAc...) asparagine glycosylation sites follow: asparagine 61, asparagine 149, asparagine 221, asparagine 246, asparagine 277, asparagine 289, asparagine 314, asparagine 352, asparagine 361, and asparagine 394. Residues 406–426 (CAVAAAAASALVFSLLFMVFL) form a helical membrane-spanning segment. The Cytoplasmic segment spans residues 427-834 (KRRRSKKTKP…FSQLKISDAR (408 aa)). Positions 488 to 761 (FDEQLLIGKG…RDVIWDLEYV (274 aa)) constitute a Protein kinase domain. Residues 494-502 (IGKGGFGYV) and lysine 516 each bind ATP. Catalysis depends on aspartate 613, which acts as the Proton acceptor.

This sequence belongs to the protein kinase superfamily. Ser/Thr protein kinase family.

It is found in the membrane. The polypeptide is Probable receptor-like protein kinase At2g23200 (Arabidopsis thaliana (Mouse-ear cress)).